The sequence spans 2169 residues: Voltage-dependent L-type calcium channel subunit alpha-1C (2169 aa).

The Cytoplasmic portion of the chain corresponds to 1–154; the sequence is MIRAFAQPST…RACISIVEWK (154 aa). Residues 77–98 are calmodulin-binding; it reads GAALSWLAAIDAARQAKLMGSA. The disordered stretch occupies residues 104–128; the sequence is STVSSTQRKRQQYGKPKKQGGTTAT. Residues 110–121 are compositionally biased toward basic residues; the sequence is QRKRQQYGKPKK. The I repeat unit spans residues 141–438; that stretch reads NPIRRACISI…LVLGVLSGEF (298 aa). A helical membrane pass occupies residues 155-173; the sequence is PFEIIILLTIFANCVALAI. Topologically, residues 174–188 are extracellular; it reads YIPFPEDDSNATNSN. A glycan (N-linked (GlcNAc...) asparagine) is linked at N183. A helical transmembrane segment spans residues 189-209; that stretch reads LERVEYLFLIIFTVEAFLKVI. At 210–218 the chain is on the cytoplasmic side; sequence AYGLLFHPN. Residues 219-239 form a helical membrane-spanning segment; that stretch reads AYLRNGWNLLDFIIVVVGLFS. The Extracellular segment spans residues 240–262; the sequence is AILEQATKADGANALGGKGAGFD. The chain crosses the membrane as a helical span at residues 263 to 281; it reads VKALRAFRVLRPLRLVSGV. Over 282–298 the chain is Cytoplasmic; it reads PSLQVVLNSIIKAMVPL. The chain crosses the membrane as a helical span at residues 299–320; that stretch reads LHIALLVLFVIIIYAIIGLELF. The Extracellular portion of the chain corresponds to 321 to 380; that stretch reads MGKMHKTCYNQEGIIDVPAEEDPSPCALETGHGRQCQNGTVCKPGWDGPKHGITNFDNFA. 2 disulfide bridges follow: C328–C356 and C346–C362. N-linked (GlcNAc...) asparagine glycosylation occurs at N358. The segment at residues 381 to 402 is an intramembrane region (pore-forming); sequence FAMLTVFQCITMEGWTDVLYWM. A Selectivity filter of repeat I motif is present at residues 391 to 394; it reads TMEG. Residue E393 participates in Ca(2+) binding. Over 403–410 the chain is Extracellular; it reads QDAMGYEL. A helical transmembrane segment spans residues 411–431; that stretch reads PWVYFVSLVIFGSFFVLNLVL. At 432–554 the chain is on the cytoplasmic side; sequence GVLSGEFSKE…RKCRAAVKSN (123 aa). An AID/alpha-interaction domain; mediates interaction with the beta subunit region spans residues 458 to 475; it reads QQLEEDLKGYLDWITQAE. A disordered region spans residues 479 to 511; it reads PENEDEGMDEDKPRNMSMPTSETESVNTENVAG. A compositionally biased stretch (polar residues) spans 495–508; that stretch reads SMPTSETESVNTEN. A Phosphoserine modification is found at S499. A Phosphothreonine modification is found at T506. The stretch at 540–786 is one II repeat; the sequence is NRFCRRKCRA…LFLAIAVDNL (247 aa). A helical membrane pass occupies residues 555 to 573; sequence VFYWLVIFLVFLNTLTIAS. The Extracellular segment spans residues 574–584; sequence EHYNQPHWLTE. Residues 585–605 traverse the membrane as a helical segment; it reads VQDTANKALLALFTAEMLLKM. The Cytoplasmic portion of the chain corresponds to 606–616; it reads YSLGLQAYFVS. Residues 617-636 form a helical membrane-spanning segment; it reads LFNRFDCFIVCGGILETILV. Topologically, residues 637–645 are extracellular; that stretch reads ETKIMSPLG. Residues 646–664 traverse the membrane as a helical segment; that stretch reads ISCWRCVRLLRIFKITRYW. Residues 665–683 lie on the Cytoplasmic side of the membrane; that stretch reads NSLSNLVASLLNSLRSIAS. A helical membrane pass occupies residues 684–703; that stretch reads LLLLLFLFIIIFSLLGMQLF. Topologically, residues 704-723 are extracellular; it reads GGKFNFDEMQTRRSTFDNFP. The segment at residues 724 to 745 is an intramembrane region (pore-forming); that stretch reads QSLLTVFQILTGEDWNSVMYDG. A Selectivity filter of repeat II motif is present at residues 734–737; the sequence is TGED. E736 is a Ca(2+) binding site. At 746 to 755 the chain is on the extracellular side; it reads IMAYGGPSFP. The chain crosses the membrane as a helical span at residues 756–775; sequence GMLVCIYFIILFISPNYILL. Over 776-930 the chain is Cytoplasmic; sequence NLFLAIAVDN…LQCHRIVNDT (155 aa). Residues 794-891 are disordered; it reads SAQKEEEEEK…EMPVGPRPRP (98 aa). Over residues 813–836 the composition is skewed to basic and acidic residues; that stretch reads SPEKKQEVMEKPAVEESKEEKIEL. Phosphoserine is present on residues S838 and S845. Residues 859-906 form an interaction with STAC2 region; that stretch reads SENEDKSPHSNPDTAGEEDEEEPEMPVGPRPRPLSELHLKEKAVPMPE. Over residues 873–882 the composition is skewed to acidic residues; the sequence is AGEEDEEEPE. The stretch at 917-1198 is one III repeat; it reads NRFRLQCHRI…IFVGFVIVTF (282 aa). A helical transmembrane segment spans residues 931–949; the sequence is IFTNLILFFILLSSISLAA. Over 950–961 the chain is Extracellular; the sequence is EDPVQHTSFRNH. Residues 962–981 traverse the membrane as a helical segment; the sequence is ILFYFDIVFTTIFTIEIALK. Over 982–997 the chain is Cytoplasmic; that stretch reads MTAYGAFLHKGSFCRN. Residues 998-1016 form a helical membrane-spanning segment; the sequence is YFNILDLLVVSVSLISFGI. Over 1017–1023 the chain is Extracellular; it reads QSSAINV. The chain crosses the membrane as a helical span at residues 1024-1041; that stretch reads VKILRVLRVLRPLRINRA. The Cytoplasmic segment spans residues 1042–1060; it reads KGLKHVVQCVFVAIRTIGN. The chain crosses the membrane as a helical span at residues 1061–1080; the sequence is IVIVTTLLQFMFACIGVQLF. Topologically, residues 1081–1130 are extracellular; sequence KGKLYTCSDSSKQTEAESKGNYITYKTGEVDHPIIQPRSWENSKFDFDNV. The interval 1118–1207 is dihydropyridine binding; that stretch reads RSWENSKFDF…FQEQGEQEYK (90 aa). The segment at residues 1131 to 1151 is an intramembrane region (pore-forming); it reads LAAMMALFTVSTFEGWPELLY. Residues 1142-1145 carry the Selectivity filter of repeat III motif; that stretch reads TFEG. Residue E1144 participates in Ca(2+) binding. The Extracellular portion of the chain corresponds to 1152-1168; the sequence is RSIDSHTEDKGPIYNYR. Residues 1169-1190 form a helical membrane-spanning segment; the sequence is VEISIFFIIYIIIIAFFMMNIF. At 1191-1248 the chain is on the cytoplasmic side; that stretch reads VGFVIVTFQEQGEQEYKNCELDKNQRQCVEYALKARPLPRYIPKNQHQYKVWYVVNST. The stretch at 1235–1508 is one IV repeat; the sequence is NQHQYKVWYV…LFVAVIMDNF (274 aa). The helical transmembrane segment at 1249-1270 threads the bilayer; that stretch reads YFEYLMFVLILLNTICLAMQHY. Topologically, residues 1271-1278 are extracellular; it reads GQSCLFKI. A helical transmembrane segment spans residues 1279–1300; sequence AMNILNMLFTGLFTVEMILKLI. Topologically, residues 1301–1310 are cytoplasmic; sequence AFKPKHYFCD. A helical membrane pass occupies residues 1311–1330; that stretch reads AWNTFDALIVVGSIVDIAIT. Topologically, residues 1331-1353 are extracellular; it reads EVHPAEHTQCSPSMSAEENSRIS. A helical transmembrane segment spans residues 1354 to 1372; sequence ITFFRLFRVMRLVKLLSRG. Over 1373 to 1390 the chain is Cytoplasmic; it reads EGIRTLLWTFIKSFQALP. Residues 1391 to 1411 form a helical membrane-spanning segment; sequence YVALLIVMLFFIYAVIGMQVF. Over 1412-1433 the chain is Extracellular; the sequence is GKIALNDTTEINRNNNFQTFPQ. A glycan (N-linked (GlcNAc...) asparagine) is linked at N1417. An intramembrane region (pore-forming) is located at residues 1434 to 1452; it reads AVLLLFRCATGEAWQDIML. Positions 1443-1446 match the Selectivity filter of repeat IV motif; it reads TGEA. At 1453-1480 the chain is on the extracellular side; sequence ACMPGKKCAPESEPSNSTEGETPCGSSF. A dihydropyridine binding region spans residues 1459–1527; sequence KCAPESEPSN…LGPHHLDEFK (69 aa). Residues C1460 and C1476 are joined by a disulfide bond. N1468 is a glycosylation site (N-linked (GlcNAc...) asparagine). Residues 1473 to 1515 form a phenylalkylamine binding region; sequence ETPCGSSFAVFYFISFYMLCAFLIINLFVAVIMDNFDYLTRDW. Residues 1481–1505 traverse the membrane as a helical segment; the sequence is AVFYFISFYMLCAFLIINLFVAVIM. The Cytoplasmic portion of the chain corresponds to 1506 to 2169; sequence DNFDYLTRDW…PDSRSYVSNL (664 aa). Residues 1640–1667 are important for interaction with STAC1, STAC2 and STAC3; that stretch reads DEVTVGKFYATFLIQEYFRKFKKRKEQG. The tract at residues 1640–1673 is calmodulin-binding; it reads DEVTVGKFYATFLIQEYFRKFKKRKEQGLVGKPS. The calmodulin-binding IQ region stretch occupies residues 1646 to 1666; it reads KFYATFLIQEYFRKFKKRKEQ. An important for localization in at the junctional membrane region spans residues 1680-1699; it reads LQAGLRTLHDIGPEIRRAIS. 2 positions are modified to phosphoserine: S1699 and S1720. Composition is skewed to polar residues over residues 1761–1770 and 1780–1792; these read KTGNNQADTE and STFTPSSYSSTGS. Residues 1761-1793 form a disordered region; sequence KTGNNQADTESPSHEKLVDSTFTPSSYSSTGSN. S1927 is subject to Phosphoserine; by PKA. Residues 1970–1998 are disordered; it reads RSHSPSTFPRPRPTPPVTPGSRGRPLQPI. The span at 1977–1987 shows a compositional bias: pro residues; that stretch reads FPRPRPTPPVT.

Belongs to the calcium channel alpha-1 subunit (TC 1.A.1.11) family. CACNA1C subfamily. Component of a calcium channel complex consisting of a pore-forming alpha subunit (CACNA1C) and ancillary beta, gamma and delta subunits. The channel complex contains alpha, beta, gamma and delta subunits in a 1:1:1:1 ratio, i.e. it contains only one of each type of subunit. CACNA1C channel activity is modulated by ancillary subunits, such as CACNB1, CACNB2, CACNB3, CACNA2D1 and CACNA2D4. Interacts with the gamma subunits CACNG4, CACNG6, CACNG7 and CACNG8. Interacts with CACNB1. Interacts with CACNB2. Identified in a complex with CACNA2D4 and CACNB3. Interacts with CACNB3. Interacts with CACNA2D1. Interacts with CACNA2D4. Interacts with CALM1. Interacts (via the N-terminus and the C-terminal C and IQ motifs) with CABP1; this inhibits Ca(2+)-dependent channel inactivation. The binding via the C motif is calcium independent whereas the binding via IQ requires the presence of calcium and is mutually exclusive with calmodulin binding. The binding to the cytoplasmic N-terminal domain is calcium independent but is essential for the channel modulation. Interacts (via C-terminal CDB motif) with CABP5; in a calcium-dependent manner. Interacts with CIB1; the interaction increases upon cardiomyocytes hypertrophy. Interacts with STAC2 and STAC3; this inhibits channel inactivation. Phosphorylation by PKA at Ser-1927 activates the channel. Elevated levels of blood glucose lead to increased phosphorylation by PKA. Is also phosphorylated in vitro by CaM-kinase II, PKC and CGPK. Detected in hippocampus and brain cortex, on neuronal cell bodies and dendrites, and in post-synaptic density in brain (at protein level). Isoforms 4 and 5 are expressed throughout the central nervous system, with highest levels in the olfactory bulb and cerebellum. Also expressed in heart, pituitary, adrenal gland, liver, kidney, and in a much lesser extent in testes and spleen.

It is found in the cell membrane. The protein localises to the sarcolemma. Its subcellular location is the perikaryon. The protein resides in the postsynaptic density membrane. It localises to the cell projection. It is found in the dendrite. The protein localises to the T-tubule. The enzyme catalyses Ca(2+)(in) = Ca(2+)(out). Its activity is regulated as follows. Inhibited by dihydropyridines (DHP), such as isradipine. Inhibited by nifedipine. Channel activity is regulated by Ca(2+) and calmodulin. Binding of STAC1, STAC2 or STAC3 to a region that overlaps with the calmodulin binding site inhibits channel inactivation by Ca(2+) and calmodulin. Binding of calmodulin or CABP1 at the same regulatory sites results in opposite effects on the channel function. Shear stress and pressure increases calcium channel activity. Functionally, pore-forming, alpha-1C subunit of the voltage-gated calcium channel that gives rise to L-type calcium currents. Mediates influx of calcium ions into the cytoplasm, and thereby triggers calcium release from the sarcoplasm. Plays an important role in excitation-contraction coupling in the heart. Required for normal heart development and normal regulation of heart rhythm. Required for normal contraction of smooth muscle cells in blood vessels and in the intestine. Essential for normal blood pressure regulation via its role in the contraction of arterial smooth muscle cells. Long-lasting (L-type) calcium channels belong to the 'high-voltage activated' (HVA) group. The polypeptide is Voltage-dependent L-type calcium channel subunit alpha-1C (Cacna1c) (Rattus norvegicus (Rat)).